A 540-amino-acid chain; its full sequence is Lysosomal cobalamin transport escort protein LMBD1 (540 aa).

The Extracellular portion of the chain corresponds to 1-10 (MATSGAASAE). A helical membrane pass occupies residues 11–31 (LVIGWCIFGLLLLAILAFCWI). Over 32–50 (YVRKYQSRRESEVVSTITA) the chain is Cytoplasmic. The chain crosses the membrane as a helical span at residues 51–71 (IFSLAIALITSALLPVDIFLV). The Extracellular segment spans residues 72 to 100 (SYMKNQNGTFKDWANANVSRQIEDTVLYG). 2 N-linked (GlcNAc...) asparagine glycosylation sites follow: asparagine 78 and asparagine 88. Residues 101 to 121 (YYTLYSVILFCVFFWIPFVYF) form a helical membrane-spanning segment. Residues 122–144 (YYEEKDDDDTSKCTQIKTALKYT) lie on the Cytoplasmic side of the membrane. Residues 145 to 165 (LGFVVICALLLLVGAFVPLNV) form a helical membrane-spanning segment. Over 166 to 188 (PNNKNSTEWEKVKSLFEELGSSH) the chain is Extracellular. N-linked (GlcNAc...) asparagine glycosylation is present at asparagine 170. A helical membrane pass occupies residues 189–209 (GLAALSFSISSLTLIGMLAAI). The Cytoplasmic segment spans residues 210–305 (TYTAYGMSAL…KFCGALRPLK (96 aa)). The YERL motif; mediates interaction with adapter protein complex 2 and is essential for its function in clathrin-mediated endocytosis of INSR motif lies at 232–235 (YERL). A Phosphothreonine modification is found at threonine 238. Residues 294–297 (WTKF) carry the WTKF motif; mediates interaction with adapter protein complex 2 and is essential for its function in clathrin-mediated endocytosis of INSR motif. Residues 306–326 (IVWGIFFILVALLFVISLFLS) form a helical membrane-spanning segment. The Extracellular portion of the chain corresponds to 327 to 364 (NLDKALHSAGIDSGFIIFGANLSNPLNMLLPLLQTVFP). An N-linked (GlcNAc...) asparagine glycan is attached at asparagine 347. Residues 365 to 385 (LDYILITIIIMYFIFTSMAGI) form a helical membrane-spanning segment. At 386 to 408 (RNIGIWFFWIRLYKIRRGRTRPQ) the chain is on the cytoplasmic side. The chain crosses the membrane as a helical span at residues 409 to 429 (ALLFLCMILLLIVLHTSYMIY). At 430–486 (SLAPQYVMYGSQNYLIETNITSDNHKGNSTLSVPKRCDADAPEDQCTVTRTYLFLHK) the chain is on the extracellular side. N-linked (GlcNAc...) asparagine glycosylation is found at asparagine 448 and asparagine 457. The helical transmembrane segment at 487–507 (FWFFSAAYYFGNWAFLGVFLI) threads the bilayer. Over 508-540 (GLIVSCCKGKKSVIEGVDEDSDISDDEPSVYSA) the chain is Cytoplasmic. Serine 528 and serine 531 each carry phosphoserine.

Belongs to the LIMR family. LMBRD1 subfamily. As to quaternary structure, (Microbial infection) Interacts with hepatitis delta virus NES (HDAg-L). Interacts with ABCD4; this interaction induces the translocation of ABCD4 from the endoplasmic reticulum to the lysosome. Interacts with ABCD4 and MMACHC; this interaction ensures the transport of cobalamin from the lysosome to the cytoplasm. Interacts with INSR, adapter protein complex 2 and clathrin heavy chain. Post-translationally, N-glycosylated. Isoform 3 is expressed in liver.

The protein resides in the endoplasmic reticulum membrane. It localises to the lysosome membrane. The protein localises to the cell membrane. It is found in the cytoplasmic vesicle. Its subcellular location is the clathrin-coated vesicle. Its function is as follows. Lysosomal membrane chaperone required to export cobalamin (vitamin B12) from the lysosome to the cytosol, allowing its conversion to cofactors. Targets ABCD4 transporter from the endoplasmic reticulum to the lysosome. Then forms a complex with lysosomal ABCD4 and cytoplasmic MMACHC to transport cobalamin across the lysosomal membrane. Acts as an adapter protein which plays an important role in mediating and regulating the internalization of the insulin receptor (INSR). Involved in clathrin-mediated endocytosis of INSR via its interaction with adapter protein complex 2. Essential for the initiation of gastrulation and early formation of mesoderm structures during embryogenesis. (Microbial infection) May play a role in the assembly of hepatitis delta virus (HDV). The sequence is that of Lysosomal cobalamin transport escort protein LMBD1 from Homo sapiens (Human).